The chain runs to 274 residues: Dermonecrotic toxin SdSicTox-betaIIB1bv (274 aa).

The active site involves His5. Residues Glu25 and Asp27 each contribute to the Mg(2+) site. The active-site Nucleophile is His41. Cystine bridges form between Cys45–Cys51 and Cys47–Cys190. Asp85 is a binding site for Mg(2+).

This sequence belongs to the arthropod phospholipase D family. Class II subfamily. Mg(2+) is required as a cofactor. As to expression, expressed by the venom gland.

The protein localises to the secreted. It catalyses the reaction an N-(acyl)-sphingosylphosphocholine = an N-(acyl)-sphingosyl-1,3-cyclic phosphate + choline. It carries out the reaction an N-(acyl)-sphingosylphosphoethanolamine = an N-(acyl)-sphingosyl-1,3-cyclic phosphate + ethanolamine. The catalysed reaction is a 1-acyl-sn-glycero-3-phosphocholine = a 1-acyl-sn-glycero-2,3-cyclic phosphate + choline. The enzyme catalyses a 1-acyl-sn-glycero-3-phosphoethanolamine = a 1-acyl-sn-glycero-2,3-cyclic phosphate + ethanolamine. Its function is as follows. Dermonecrotic toxins cleave the phosphodiester linkage between the phosphate and headgroup of certain phospholipids (sphingolipid and lysolipid substrates), forming an alcohol (often choline) and a cyclic phosphate. This toxin acts on sphingomyelin (SM). It may also act on ceramide phosphoethanolamine (CPE), lysophosphatidylcholine (LPC) and lysophosphatidylethanolamine (LPE), but not on lysophosphatidylserine (LPS), and lysophosphatidylglycerol (LPG). It acts by transphosphatidylation, releasing exclusively cyclic phosphate products as second products. Induces dermonecrosis, hemolysis, increased vascular permeability, edema, inflammatory response, and platelet aggregation. This Sicarius cf. damarensis (strain GJB-2008) (Six-eyed sand spider) protein is Dermonecrotic toxin SdSicTox-betaIIB1bv.